Consider the following 432-residue polypeptide: Adenylosuccinate synthetase (432 aa).

GTP is bound by residues glycine 13–lysine 19 and glycine 41–threonine 43. Aspartate 14 serves as the catalytic Proton acceptor. 2 residues coordinate Mg(2+): aspartate 14 and glycine 41. IMP is bound by residues aspartate 14 to lysine 17, asparagine 39 to histidine 42, threonine 130, arginine 144, glutamine 225, threonine 240, and arginine 304. The active-site Proton donor is histidine 42. Alanine 300–arginine 306 contributes to the substrate binding site. Residues arginine 306, lysine 332–aspartate 334, and serine 415–glycine 417 contribute to the GTP site.

It belongs to the adenylosuccinate synthetase family. In terms of assembly, homodimer. The cofactor is Mg(2+).

The protein localises to the cytoplasm. It catalyses the reaction IMP + L-aspartate + GTP = N(6)-(1,2-dicarboxyethyl)-AMP + GDP + phosphate + 2 H(+). It participates in purine metabolism; AMP biosynthesis via de novo pathway; AMP from IMP: step 1/2. Plays an important role in the de novo pathway of purine nucleotide biosynthesis. Catalyzes the first committed step in the biosynthesis of AMP from IMP. In Yersinia pseudotuberculosis serotype O:1b (strain IP 31758), this protein is Adenylosuccinate synthetase.